A 275-amino-acid polypeptide reads, in one-letter code: Large ribosomal subunit protein uL2 (275 aa).

The tract at residues 222–275 (GVAMNPVDHPHGGGEGRNKGRHPTSPWGQKSKGLKTRHNKRTDNMIIRRRAKKK) is disordered. Residues 229–239 (DHPHGGGEGRN) are compositionally biased toward basic and acidic residues.

It belongs to the universal ribosomal protein uL2 family. Part of the 50S ribosomal subunit. Forms a bridge to the 30S subunit in the 70S ribosome.

One of the primary rRNA binding proteins. Required for association of the 30S and 50S subunits to form the 70S ribosome, for tRNA binding and peptide bond formation. It has been suggested to have peptidyltransferase activity; this is somewhat controversial. Makes several contacts with the 16S rRNA in the 70S ribosome. This Psychrobacter cryohalolentis (strain ATCC BAA-1226 / DSM 17306 / VKM B-2378 / K5) protein is Large ribosomal subunit protein uL2.